The sequence spans 243 residues: MKAEQNTDAHNVDRGEIAKFEAVASRWWDLEGEFKPLHRINPLRLDWIAQHANGLFGKKVLDVGCGGGILSESMAREGANVTGLDMGAEPLQVARLHALESGVNIDYVQQTVEEHADRFAGQYDVVTCMEMLEHVPDPRSVVHACAKLVKPGGEVFFSTLNRNSKSWLMAIVGAEYILRMVPRGTHDIKKFIRPGELLNWVDETPLRERHIIGLHYNPLTNRFKLAPGVDVNYMVHTHRNITD.

4 residues coordinate S-adenosyl-L-methionine: Arg-44, Gly-64, Asp-85, and Met-129.

Belongs to the methyltransferase superfamily. UbiG/COQ3 family.

It carries out the reaction a 3-demethylubiquinol + S-adenosyl-L-methionine = a ubiquinol + S-adenosyl-L-homocysteine + H(+). The catalysed reaction is a 3-(all-trans-polyprenyl)benzene-1,2-diol + S-adenosyl-L-methionine = a 2-methoxy-6-(all-trans-polyprenyl)phenol + S-adenosyl-L-homocysteine + H(+). Its pathway is cofactor biosynthesis; ubiquinone biosynthesis. O-methyltransferase that catalyzes the 2 O-methylation steps in the ubiquinone biosynthetic pathway. This chain is Ubiquinone biosynthesis O-methyltransferase, found in Erwinia tasmaniensis (strain DSM 17950 / CFBP 7177 / CIP 109463 / NCPPB 4357 / Et1/99).